An 875-amino-acid chain; its full sequence is Leucine--tRNA ligase (875 aa).

A 'HIGH' region motif is present at residues 43–53 (PYPSGRIHIGH). A 'KMSKS' region motif is present at residues 631-635 (KMSKS). Lys634 contributes to the ATP binding site.

This sequence belongs to the class-I aminoacyl-tRNA synthetase family.

It localises to the cytoplasm. It carries out the reaction tRNA(Leu) + L-leucine + ATP = L-leucyl-tRNA(Leu) + AMP + diphosphate. The sequence is that of Leucine--tRNA ligase from Mesorhizobium japonicum (strain LMG 29417 / CECT 9101 / MAFF 303099) (Mesorhizobium loti (strain MAFF 303099)).